We begin with the raw amino-acid sequence, 1119 residues long: Solute carrier family 38 member 10 (1119 aa).

10 helical membrane passes run 4 to 24, 36 to 58, 84 to 104, 120 to 140, 153 to 173, 229 to 249, 272 to 292, 323 to 343, 345 to 365, and 378 to 398; these read AAAS…GVSV, IVLG…MFLV, LVET…YVVI, VGGT…VLPL, FSAM…LSSL, IFAS…FFGY, MLRV…ILPC, ALTL…PNVE, ILGL…PALI, and VVLW…LSVS. 2 disordered regions span residues 438-691 and 731-1071; these read AEDG…EEAG and KEIH…DGVI. Basic and acidic residues-rich tracts occupy residues 439–454, 466–475, 493–522, 544–559, and 592–603; these read EDGR…REEL, PGREDGKEAP, EAHR…ENKP, DSER…EVGK, and AKEDLGPGDRGL. Serine 612 bears the Phosphoserine mark. Pro residues predominate over residues 652-667; it reads PPLPAEKPAPGPGLPP. 3 stretches are compositionally biased toward basic and acidic residues: residues 668–677, 731–752, and 763–773; these read EPREQRDVER, KEIH…EVHQ, and EAPEGKARETV. The residue at position 772 (threonine 772) is a Phosphothreonine. Serine 802 carries the phosphoserine modification. 2 stretches are compositionally biased toward basic and acidic residues: residues 832 to 841 and 863 to 876; these read KLRDGQKDAA and PARE…RLAE. Positions 880 to 889 are enriched in polar residues; it reads GQSQDVTGGS. Phosphoserine occurs at positions 889, 965, and 997. Basic and acidic residues-rich tracts occupy residues 975 to 1005, 1012 to 1022, and 1033 to 1042; these read HRLD…RGGE, PRQRPEPELGL, and DNAKPNRDLK.

The protein belongs to the amino acid/polyamine transporter 2 family.

It is found in the membrane. It catalyses the reaction L-glutamate(out) = L-glutamate(in). The enzyme catalyses L-glutamine(out) = L-glutamine(in). The catalysed reaction is L-alanine(in) = L-alanine(out). It carries out the reaction L-serine(in) = L-serine(out). It catalyses the reaction L-leucine(in) = L-leucine(out). Its function is as follows. Facilitates bidirectional transport of amino acids. May act as a glutamate sensor that regulates glutamate-glutamine cycle and mTOR signaling in the brain. The transport mechanism remains to be elucidated. This chain is Solute carrier family 38 member 10, found in Homo sapiens (Human).